The following is a 215-amino-acid chain: Probable GTP-binding protein EngB (215 aa).

In terms of domain architecture, EngB-type G spans 31–215 (GPPEIAFAGR…RAAILQAIAV (185 aa)). GTP is bound by residues 39–46 (GRSNVGKS), 66–70 (GRTQE), 93–96 (DMPG), 160–163 (TKSD), and 194–196 (TSS). Residues Ser46 and Thr68 each coordinate Mg(2+).

Belongs to the TRAFAC class TrmE-Era-EngA-EngB-Septin-like GTPase superfamily. EngB GTPase family. Mg(2+) serves as cofactor.

Functionally, necessary for normal cell division and for the maintenance of normal septation. The chain is Probable GTP-binding protein EngB from Bartonella quintana (strain Toulouse) (Rochalimaea quintana).